The primary structure comprises 400 residues: Hyaluronidase (400 aa).

The N-terminal stretch at Met-1 to Gly-19 is a signal peptide. Disulfide bonds link Cys-31-Cys-319, Cys-196-Cys-209, Cys-344-Cys-355, Cys-349-Cys-384, and Cys-386-Cys-395. Glu-120 functions as the Proton donor in the catalytic mechanism. 2 N-linked (GlcNAc...) asparagine glycosylation sites follow: Asn-129 and Asn-166. Residues Asn-243 and Asn-275 are each glycosylated (N-linked (GlcNAc...) asparagine). The region spanning Asn-340–Glu-396 is the EGF-like domain.

This sequence belongs to the glycosyl hydrolase 56 family. In terms of assembly, monomer. As to expression, expressed by the venom gland.

Its subcellular location is the secreted. The catalysed reaction is Random hydrolysis of (1-&gt;4)-linkages between N-acetyl-beta-D-glucosamine and D-glucuronate residues in hyaluronate.. In terms of biological role, spider venom endo-hyaluronidase that is able to degrade purified hyaluronic acid (HA) and chondroitin sulfate (CS). Has no activity on dermatan sulfate (DS) and heparan sulfate (HS). Also increases the dermonecrotic effect of the dermonecrotic toxin (AC P0CE80), when injected in rabbit skin, supporting the hypothesis that venom hyaluronidases are spreading factors. The chain is Hyaluronidase from Loxosceles intermedia (Brown spider).